The primary structure comprises 312 residues: Glutaminase (312 aa).

Substrate is bound by residues Ser-67, Asn-118, Glu-162, Asn-169, Tyr-193, Tyr-245, and Val-263.

This sequence belongs to the glutaminase family. In terms of assembly, homotetramer.

It carries out the reaction L-glutamine + H2O = L-glutamate + NH4(+). In Bordetella avium (strain 197N), this protein is Glutaminase.